A 235-amino-acid polypeptide reads, in one-letter code: MRSQIYRSATKAARSFLSSSKNASSRFLPEGRTVAATAAVSLRVKAPYLASFGGANASGTWMSTALAIPAAAYLLQDQEACAAEFERTFIAIKPDGVQRGLISEIVARFERKGFKLVAIKVVIPSKDFAQKHYHDLSERPFFNGLCDFLSSGPVVAMVWEGEGVIKYGRKLIGATDPQKSEPGTIRGDLAVVVGRNIIHGSDGPETAKDEIKLWFKPEELVNYTHNAEKWIYGDN.

The ATP site is built by K93, F141, R169, T175, R186, and N196. The active-site Pros-phosphohistidine intermediate is the H199.

This sequence belongs to the NDK family. As to quaternary structure, homohexamer. Mg(2+) serves as cofactor.

It is found in the plastid. The protein resides in the chloroplast thylakoid lumen. The catalysed reaction is a 2'-deoxyribonucleoside 5'-diphosphate + ATP = a 2'-deoxyribonucleoside 5'-triphosphate + ADP. It catalyses the reaction a ribonucleoside 5'-diphosphate + ATP = a ribonucleoside 5'-triphosphate + ADP. Major role in the synthesis of nucleoside triphosphates other than ATP. The ATP gamma phosphate is transferred to the NDP beta phosphate via a ping-pong mechanism, using a phosphorylated active-site intermediate. Shows the highest specificity towards GDP. The chain is Nucleoside diphosphate kinase 4, chloroplastic (NDK4) from Spinacia oleracea (Spinach).